The sequence spans 423 residues: UPF0597 protein TTE0269 (423 aa).

This sequence belongs to the UPF0597 family.

In Caldanaerobacter subterraneus subsp. tengcongensis (strain DSM 15242 / JCM 11007 / NBRC 100824 / MB4) (Thermoanaerobacter tengcongensis), this protein is UPF0597 protein TTE0269.